We begin with the raw amino-acid sequence, 439 residues long: Xaa-Pro dipeptidase (439 aa).

5 residues coordinate Mn(2+): aspartate 244, aspartate 255, histidine 335, glutamate 380, and glutamate 419.

The protein belongs to the peptidase M24B family. Bacterial-type prolidase subfamily. Mn(2+) serves as cofactor.

It carries out the reaction Xaa-L-Pro dipeptide + H2O = an L-alpha-amino acid + L-proline. Its function is as follows. Splits dipeptides with a prolyl residue in the C-terminal position. This chain is Xaa-Pro dipeptidase, found in Shewanella woodyi (strain ATCC 51908 / MS32).